A 75-amino-acid chain; its full sequence is Serine rich endogenous peptide 20 (75 aa).

Positions 1–25 (MYKLTLCILTLSFLLLSGLSNTVLA) are cleaved as a signal peptide. The SCOOP motif motif lies at 52–66 (KIGASGSNSGRAPSC). The tract at residues 54–75 (GASGSNSGRAPSCNNSCKPNRP) is disordered. A SxS motif essential for MIK2 binding motif is present at residues 56-58 (SGS). Over residues 56-75 (SGSNSGRAPSCNNSCKPNRP) the composition is skewed to polar residues.

Belongs to the serine rich endogenous peptide (SCOOP) phytocytokine family. As to quaternary structure, interacts with MIK2 (via extracellular leucine-rich repeat domain); this interaction triggers the formation of complex between MIK2 and the BAK1/SERK3 and SERK4 coreceptors, and subsequent BAK1 activation by phosphorylation. In terms of tissue distribution, mostly expressed in roots.

The protein localises to the cell membrane. Its subcellular location is the secreted. The protein resides in the extracellular space. It localises to the apoplast. In terms of biological role, brassicaceae-specific phytocytokine (plant endogenous peptide released into the apoplast) perceived by MIK2 in a BAK1/SERK3 and SERK4 coreceptors-dependent manner, that modulates various physiological and antimicrobial processes including growth prevention and reactive oxygen species (ROS) response regulation. Inhibits root growth. The sequence is that of Serine rich endogenous peptide 20 from Arabidopsis thaliana (Mouse-ear cress).